The chain runs to 736 residues: Oligopeptide transporter 6 (736 aa).

Transmembrane regions (helical) follow at residues 43-63, 66-86, 116-136, 148-168, 210-230, 258-278, 288-308, 357-377, 412-432, 443-463, 489-511, 527-547, 602-622, 645-665, and 678-698; these read MWVL…FFWY, MPLS…GHLM, VLIT…HILS, FLPA…WAGL, FFLI…YLFT, LGIG…GSPL, VAIG…WLNI, FFAV…VHVL, VPLW…MFIS, WWGV…IGVI, PVAN…TFIS, FMAQ…TAWW, WFFL…KMFP, ATAV…HFIF, and VLSG…FLAL.

The protein belongs to the oligopeptide OPT transporter (TC 2.A.67.1) family. In terms of tissue distribution, expressed in flowers and roots, and at a low level in leaves and stems. Detected in the cambial zone of the vascular bundles and in the region of lateral root initiation. Low expression in the vascular network of the petals and high in the stamen filaments and the gynoecium.

The protein localises to the membrane. Functionally, involved in the translocation of tetra- and pentapeptides across the cellular membrane in an energy-dependent manner. Also involved in transport of glutathione derivatives and metal complexes, and may be involved in stress resistance. In Arabidopsis thaliana (Mouse-ear cress), this protein is Oligopeptide transporter 6 (OPT6).